Consider the following 256-residue polypeptide: Phosphomannomutase (256 aa).

Catalysis depends on D12, which acts as the Nucleophile. Positions 12 and 14 each coordinate Mg(2+). Residue D14 is the Proton donor/acceptor of the active site. Residues R21, R123, R134, R141, S179, and D181 each contribute to the alpha-D-mannose 1-phosphate site. D209 provides a ligand contact to Mg(2+).

It belongs to the eukaryotic PMM family. Homodimer.

It localises to the cytoplasm. The enzyme catalyses alpha-D-mannose 1-phosphate = D-mannose 6-phosphate. It functions in the pathway nucleotide-sugar biosynthesis; GDP-alpha-D-mannose biosynthesis; alpha-D-mannose 1-phosphate from D-fructose 6-phosphate: step 2/2. Involved in the synthesis of the GDP-mannose and dolichol-phosphate-mannose required for a number of critical mannosyl transfer reactions. This Encephalitozoon cuniculi (strain GB-M1) (Microsporidian parasite) protein is Phosphomannomutase (SEC53).